Consider the following 631-residue polypeptide: MALPGSSTVFLLALTIIASTQALTPTHYLTKHDVERLKASLDRPFTSLESAFYSIVGLSSLGAQVPDVKKACTFIKSNLDPSNVDSLFYAAQSSQALSGCEISISNETKDLLLAAVSEDSSVAQIYHAVAALSGFGLPLASQEALGALTARLSKEETVLATVQALQTASYLSQQADLRSIVEEIEDLVARLDELGGVYLQFEEGLETTALFVAATYKLMDHVGTEPSIKEDQVIQLMNAIFSKKNFESLSEAFSVASAAAALSENRYHVPVVVVPEGSPSYTQEQAILRLQVTNVLSQPLTQATVKLEHAKSVASRATVLQKTSFTLIGDVFELNFMNVKFSSGYYDFSVKVEGDNRYIANTVELRVKISTEVGITNVDLSTVDKDQSIAPKTTRVTYPAKAKGTFIADSHQNFALFFQLVDVNTGAELTPHQTFVRLHNQKTGQEVVFVAEPDSKNVYKFELDTSERKLEFDSASGTYTLYLIIGDATLKNPILWNVADVVIRFPEDDVPSTVLSKNIFTPKQEIQHLFREPEKRPPTVVSNTFTALILSPLLLLFALWIRIGANVSNFTFAPSTIVFHLGHAAMLGLMYVYWTQLNMFQTLKYLAILGSVTFLAGNRMLAQQAIKRTAH.

The signal sequence occupies residues 1–22 (MALPGSSTVFLLALTIIASTQA). Over 23 to 540 (LTPTHYLTKH…REPEKRPPTV (518 aa)) the chain is Lumenal. An N-linked (GlcNAc...) asparagine glycan is attached at Asn-106. Residue Lys-154 forms a Glycyl lysine isopeptide (Lys-Gly) (interchain with G-Cter in ubiquitin) linkage. The helical transmembrane segment at 541-561 (VSNTFTALILSPLLLLFALWI) threads the bilayer. Residues 562-571 (RIGANVSNFT) are Cytoplasmic-facing. The helical transmembrane segment at 572–592 (FAPSTIVFHLGHAAMLGLMYV) threads the bilayer. The Lumenal portion of the chain corresponds to 593–596 (YWTQ). The chain crosses the membrane as a helical span at residues 597 to 617 (LNMFQTLKYLAILGSVTFLAG). The Cytoplasmic portion of the chain corresponds to 618–631 (NRMLAQQAIKRTAH).

This sequence belongs to the SWP1 family. Component of the oligosaccharyltransferase (OST) complex. OST exists in two different complex forms which contain common core subunits RPN1, RPN2, OST48, OST4, DAD1 and TMEM258, either STT3A or STT3B as catalytic subunits, and form-specific accessory subunits. STT3A complex assembly occurs through the formation of 3 subcomplexes. Subcomplex 1 contains RPN1 and TMEM258, subcomplex 2 contains the STT3A-specific subunits STT3A, DC2/OSTC, and KCP2 as well as the core subunit OST4, and subcomplex 3 contains RPN2, DAD1, and OST48. The STT3A complex can form stable complexes with the Sec61 complex or with both the Sec61 and TRAP complexes. Interacts with DDI2. Interacts with TMEM35A/NACHO.

The protein resides in the endoplasmic reticulum. Its subcellular location is the endoplasmic reticulum membrane. Its pathway is protein modification; protein glycosylation. In terms of biological role, subunit of the oligosaccharyl transferase (OST) complex that catalyzes the initial transfer of a defined glycan (Glc(3)Man(9)GlcNAc(2) in eukaryotes) from the lipid carrier dolichol-pyrophosphate to an asparagine residue within an Asn-X-Ser/Thr consensus motif in nascent polypeptide chains, the first step in protein N-glycosylation. N-glycosylation occurs cotranslationally and the complex associates with the Sec61 complex at the channel-forming translocon complex that mediates protein translocation across the endoplasmic reticulum (ER). All subunits are required for a maximal enzyme activity. The chain is Dolichyl-diphosphooligosaccharide--protein glycosyltransferase subunit 2 from Bos taurus (Bovine).